The following is a 580-amino-acid chain: MPFHVEGLVAIILFYLLIFLVGIWAAWKTKNSGNAEERSEAIIVGGRDIGLLVGGFTMTATWVGGGYINGTAEAVYGPGCGLAWAQAPIGYSLSLILGGLFFAKPMRSKGYVTMLDPFQQIYGKRMGGLLFIPALMGEMFWAAAIFSALGATISVIIDVDVNISVIVSALIAILYTLVGGLYSVAYTDVVQLFCIFIGLWISVPFALSHPAVTDIGFTAVHAKYQSPWLGTIESVEVYTWLDNFLLLMLGGIPWQAYFQRVLSSSSATYAQVLSFLAAFGCLVMALPAICIGAIGASTDWNQTAYGFPDPKTKEEADMILPIVLQYLCPVYISFFGLGAVSAAVMSSADSSILSASSMFARNIYQLSFRQNASDKEIVWVMRITVFVFGASATAMALLTKTVYGLWYLSSDLVYIIIFPQLLCVLFIKGTNTYGAVAGYIFGLFLRITGGEPYLYLQPLIFYPGYYPDKNGIYNQRFPFKTLSMVTSFFTNICVSYLAKYLFESGTLPPKLDIFDAVVSRHSEENMDKTILVRNENIKLNELAPVKPRQSLTLSSTFTNKEALLDVDSSPEGSGTEDNLQ.

The Extracellular portion of the chain corresponds to 1-6 (MPFHVE). The helical transmembrane segment at 7-27 (GLVAIILFYLLIFLVGIWAAW) threads the bilayer. Residues 28-48 (KTKNSGNAEERSEAIIVGGRD) lie on the Cytoplasmic side of the membrane. The chain crosses the membrane as a helical span at residues 49–69 (IGLLVGGFTMTATWVGGGYIN). The Extracellular segment spans residues 70-81 (GTAEAVYGPGCG). Residues 82 to 102 (LAWAQAPIGYSLSLILGGLFF) traverse the membrane as a helical segment. Residues 103 to 125 (AKPMRSKGYVTMLDPFQQIYGKR) lie on the Cytoplasmic side of the membrane. Residues 126–146 (MGGLLFIPALMGEMFWAAAIF) form a helical membrane-spanning segment. At 147 to 164 (SALGATISVIIDVDVNIS) the chain is on the extracellular side. Residues 165–185 (VIVSALIAILYTLVGGLYSVA) traverse the membrane as a helical segment. Over 186-191 (YTDVVQ) the chain is Cytoplasmic. The helical transmembrane segment at 192-212 (LFCIFIGLWISVPFALSHPAV) threads the bilayer. At 213-237 (TDIGFTAVHAKYQSPWLGTIESVEV) the chain is on the extracellular side. A helical membrane pass occupies residues 238–258 (YTWLDNFLLLMLGGIPWQAYF). Over 259–274 (QRVLSSSSATYAQVLS) the chain is Cytoplasmic. The chain crosses the membrane as a helical span at residues 275–295 (FLAAFGCLVMALPAICIGAIG). Residues 296-317 (ASTDWNQTAYGFPDPKTKEEAD) are Extracellular-facing. N-linked (GlcNAc...) asparagine glycosylation occurs at asparagine 301. A helical transmembrane segment spans residues 318-338 (MILPIVLQYLCPVYISFFGLG). At 339–376 (AVSAAVMSSADSSILSASSMFARNIYQLSFRQNASDKE) the chain is on the cytoplasmic side. Residues 377–397 (IVWVMRITVFVFGASATAMAL) form a helical membrane-spanning segment. Residues 398–406 (LTKTVYGLW) lie on the Extracellular side of the membrane. The helical transmembrane segment at 407-427 (YLSSDLVYIIIFPQLLCVLFI) threads the bilayer. The Cytoplasmic portion of the chain corresponds to 428-435 (KGTNTYGA). A helical membrane pass occupies residues 436–456 (VAGYIFGLFLRITGGEPYLYL). Over 457 to 481 (QPLIFYPGYYPDKNGIYNQRFPFKT) the chain is Extracellular. Residues 482 to 502 (LSMVTSFFTNICVSYLAKYLF) traverse the membrane as a helical segment. A mediates interaction with SEC14L1 region spans residues 502–580 (FESGTLPPKL…EGSGTEDNLQ (79 aa)). Over 503 to 580 (ESGTLPPKLD…EGSGTEDNLQ (78 aa)) the chain is Cytoplasmic. The Dileucine-like motif signature appears at 527–532 (DKTILV).

This sequence belongs to the sodium:solute symporter (SSF) (TC 2.A.21) family. As to quaternary structure, homooligomerizes at cell surface. Interacts with SEC14L1; may regulate SLC5A7. In terms of processing, phosphorylated. As to expression, expressed in basal forebrain, brain stem, spinal chord, and striatum. Specific for cholinergic neurons.

Its subcellular location is the presynaptic cell membrane. The protein resides in the cell projection. It is found in the axon. The protein localises to the early endosome membrane. It localises to the cytoplasmic vesicle. Its subcellular location is the secretory vesicle. The protein resides in the synaptic vesicle membrane. It carries out the reaction choline(out) + n Na(+)(out) = choline(in) + n Na(+)(in). Choline uptake activity is regulated by SLC5A7/CHT1 internalization (inactive form) from the cell surface and recycling of internalized SLC5A7/CHT1 into the cell surface (active form). Activated by extracellular chloride ion. Specifically inhibited by nanomolar concentrations of hemicholinium 3. In terms of biological role, high-affinity Na(+)-coupled choline transmembrane symporter. Functions as an electrogenic, voltage-dependent transporter with variable charge/choline stoichiometry. Choline uptake and choline-induced current is also Cl(-)-dependent where Cl(-) is likely a regulatory ion rather than cotransported ion. Plays a critical role in acetylcholine (ACh) synthesis by taking up the substrate choline from the synaptic cleft into the presynaptic nerve terminals after neurotransmitter release. SLC5A7/CHT1-mediated choline high-affinity transport in cholinergic neurons is the rate-limiting step for production of ACh, thereby facilitating communication by subsequent action potentials. Localized predominantly in presynaptic terminal intracellular organelles, and translocated to the plasma membrane in active form in response to neuronal activity. This chain is High affinity choline transporter 1, found in Rattus norvegicus (Rat).